The following is a 233-amino-acid chain: Glucosamine-6-phosphate deaminase (233 aa).

D62 functions as the Proton acceptor; for enolization step in the catalytic mechanism. N128 serves as the catalytic For ring-opening step. The active-site Proton acceptor; for ring-opening step is the H130. E135 acts as the For ring-opening step in catalysis.

This sequence belongs to the glucosamine/galactosamine-6-phosphate isomerase family. NagB subfamily.

The enzyme catalyses alpha-D-glucosamine 6-phosphate + H2O = beta-D-fructose 6-phosphate + NH4(+). Its pathway is amino-sugar metabolism; N-acetylneuraminate degradation; D-fructose 6-phosphate from N-acetylneuraminate: step 5/5. Its function is as follows. Catalyzes the reversible isomerization-deamination of glucosamine 6-phosphate (GlcN6P) to form fructose 6-phosphate (Fru6P) and ammonium ion. The chain is Glucosamine-6-phosphate deaminase from Streptococcus thermophilus (strain ATCC BAA-491 / LMD-9).